The sequence spans 495 residues: ATP synthase subunit beta, chloroplastic (495 aa).

Residue 172–179 (GGAGVGKT) coordinates ATP.

The protein belongs to the ATPase alpha/beta chains family. In terms of assembly, F-type ATPases have 2 components, CF(1) - the catalytic core - and CF(0) - the membrane proton channel. CF(1) has five subunits: alpha(3), beta(3), gamma(1), delta(1), epsilon(1). CF(0) has four main subunits: a(1), b(1), b'(1) and c(9-12).

It is found in the plastid. The protein resides in the chloroplast thylakoid membrane. The enzyme catalyses ATP + H2O + 4 H(+)(in) = ADP + phosphate + 5 H(+)(out). Functionally, produces ATP from ADP in the presence of a proton gradient across the membrane. The catalytic sites are hosted primarily by the beta subunits. The chain is ATP synthase subunit beta, chloroplastic from Barnardia japonica (Chinese squill).